A 280-amino-acid chain; its full sequence is Intimin (280 aa).

The region spanning 1–92 (ITEIKADKTT…MLKLLEVEFF (92 aa)) is the Big-1 domain. In terms of domain architecture, BIG2 spans 127-173 (ANGGNGKYTWYSANPAIASVDPSSGQVTLKDKGETTITVVSGDKQTA). Cysteine 201 and cysteine 278 are oxidised to a cystine.

It belongs to the intimin/invasin family.

Its subcellular location is the cell outer membrane. Its function is as follows. An inverse autotransporter. This chain is Intimin (eaeA), found in Hafnia alvei.